A 123-amino-acid polypeptide reads, in one-letter code: Sperm-associated antigen 11A (123 aa).

Residues 1-25 (MRQRLLPSVTSLLLVALLFPGSSQA) form the signal peptide. An N-linked (GlcNAc...) asparagine glycan is attached at Asn29.

It belongs to the SPAG11 family.

The protein localises to the secreted. Its function is as follows. Has antimicrobial activity against E.coli. Plays a role in the defense response in the male reproductive tract, contributing to sperm maturation, storage and protection. The protein is Sperm-associated antigen 11A of Homo sapiens (Human).